The following is a 58-amino-acid chain: ATP synthase F(0) complex subunit k, mitochondrial (58 aa).

Lys-16 and Lys-17 each carry N6-acetyllysine. The helical transmembrane segment at 23–45 threads the bilayer; it reads TLTGRMNCVLATYGGIALLVLYF.

In terms of assembly, component of the ATP synthase complex composed at least of ATP5F1A/subunit alpha, ATP5F1B/subunit beta, ATP5MC1/subunit c (homooctomer), MT-ATP6/subunit a, MT-ATP8/subunit 8, ATP5ME/subunit e, ATP5MF/subunit f, ATP5MG/subunit g, ATP5MK/subunit k, ATP5MJ/subunit j, ATP5F1C/subunit gamma, ATP5F1D/subunit delta, ATP5F1E/subunit epsilon, ATP5PF/subunit F6, ATP5PB/subunit b, ATP5PD/subunit d, ATP5PO/subunit OSCP. ATP synthase complex consists of a soluble F(1) head domain (subunits alpha(3) and beta(3)) - the catalytic core - and a membrane F(0) domain - the membrane proton channel (subunits c, a, 8, e, f, g, k and j). These two domains are linked by a central stalk (subunits gamma, delta, and epsilon) rotating inside the F1 region and a stationary peripheral stalk (subunits F6, b, d, and OSCP). The ATP synthase complex/complex V exists as a monomeric and a dimeric supercomplex that helps shape mitochondrial cristae to optimize proton flow. Ubiquitous. Highly expressed in skeletal and cardiac muscle. Moderately expressed in brain, thymus, stomach and testis. Lowest expression levels were detected in lung, liver, kidney, adrenal gland, spleen, small intestine and adipose tissue. In streptozotocin-induced diabetes, the insulin-sensitive tissues skeletal and cardiac muscle were down-regulated.

It localises to the mitochondrion membrane. Functionally, subunit k, of the mitochondrial membrane ATP synthase complex (F(1)F(0) ATP synthase or Complex V) that produces ATP from ADP in the presence of a proton gradient across the membrane which is generated by electron transport complexes of the respiratory chain. ATP synthase complex consist of a soluble F(1) head domain - the catalytic core - and a membrane F(1) domain - the membrane proton channel. These two domains are linked by a central stalk rotating inside the F(1) region and a stationary peripheral stalk. During catalysis, ATP synthesis in the catalytic domain of F(1) is coupled via a rotary mechanism of the central stalk subunits to proton translocation. In vivo, can only synthesize ATP although its ATP hydrolase activity can be activated artificially in vitro. Part of the complex F(0) domain. Required for dimerization of the ATP synthase complex and as such regulates ATP synthesis in the mitochondria. This is ATP synthase F(0) complex subunit k, mitochondrial (Atp5mk) from Rattus norvegicus (Rat).